Here is a 174-residue protein sequence, read N- to C-terminus: Protein CURVATURE THYLAKOID 1B, chloroplastic (174 aa).

The disordered stretch occupies residues 1-20 (MASLSVSSSSTIIDSRAPPS). The N-terminal 63 residues, 1–63 (MASLSVSSSS…RKIVRNVVTR (63 aa)), are a transit peptide targeting the chloroplast. A64 is modified (N-acetylalanine). Topologically, residues 64-100 (ATTEVGEAPATTTEAETTELPEIVKTAQEAWEKVDDK) are stromal. The helical transmembrane segment at 101 to 121 (YAIGSLAFAGVVALWGSAGMI) threads the bilayer. The Lumenal segment spans residues 122 to 126 (SAIDR). Residues 127–147 (LPLVPGVLELVGIGYTGWFTY) form a helical membrane-spanning segment. Over 148 to 174 (KNLVFKPDREALFEKVKSTYKDILGSS) the chain is Stromal.

Belongs to the CURT family. As to quaternary structure, homo- and heterodimers and trimers. Interacts with PSAL. Phosphorylated on either Thr-65 or Thr-66 by a threonine specific thylakoid kinase.

Its subcellular location is the plastid. It is found in the chloroplast thylakoid membrane. In terms of biological role, determines thylakoid architecture by inducing membrane curvature. The polypeptide is Protein CURVATURE THYLAKOID 1B, chloroplastic (CURT1B) (Arabidopsis thaliana (Mouse-ear cress)).